Here is a 292-residue protein sequence, read N- to C-terminus: Mycothiol acetyltransferase (292 aa).

2 consecutive N-acetyltransferase domains span residues 13–168 and 159–292; these read ALDR…KWLQ and KSVA…VYEK. Glu40 contributes to the 1D-myo-inositol 2-(L-cysteinylamino)-2-deoxy-alpha-D-glucopyranoside binding site. 77 to 79 is an acetyl-CoA binding site; sequence LAV. 1D-myo-inositol 2-(L-cysteinylamino)-2-deoxy-alpha-D-glucopyranoside-binding residues include Glu179, Lys218, and Glu226. Acetyl-CoA-binding positions include 230–232 and 237–243; these read VGL and RGRGLGD. Position 264 (Tyr264) interacts with 1D-myo-inositol 2-(L-cysteinylamino)-2-deoxy-alpha-D-glucopyranoside.

It belongs to the acetyltransferase family. MshD subfamily. In terms of assembly, monomer.

It catalyses the reaction 1D-myo-inositol 2-(L-cysteinylamino)-2-deoxy-alpha-D-glucopyranoside + acetyl-CoA = mycothiol + CoA + H(+). In terms of biological role, catalyzes the transfer of acetyl from acetyl-CoA to desacetylmycothiol (Cys-GlcN-Ins) to form mycothiol. The polypeptide is Mycothiol acetyltransferase (Corynebacterium glutamicum (strain ATCC 13032 / DSM 20300 / JCM 1318 / BCRC 11384 / CCUG 27702 / LMG 3730 / NBRC 12168 / NCIMB 10025 / NRRL B-2784 / 534)).